A 232-amino-acid chain; its full sequence is Cytidylate kinase (232 aa).

An ATP-binding site is contributed by 11 to 19 (GPAGAGKST).

This sequence belongs to the cytidylate kinase family. Type 1 subfamily.

Its subcellular location is the cytoplasm. It catalyses the reaction CMP + ATP = CDP + ADP. It carries out the reaction dCMP + ATP = dCDP + ADP. This chain is Cytidylate kinase, found in Desulfitobacterium hafniense (strain Y51).